Reading from the N-terminus, the 73-residue chain is Sec-independent protein translocase protein TatA (73 aa).

The chain crosses the membrane as a helical span at residues 1–21 (MGLSWQQLLILLLVVVVIFGT).

This sequence belongs to the TatA/E family. As to quaternary structure, the Tat system comprises two distinct complexes: a TatABC complex, containing multiple copies of TatA, TatB and TatC subunits, and a separate TatA complex, containing only TatA subunits. Substrates initially bind to the TatABC complex, which probably triggers association of the separate TatA complex to form the active translocon.

The protein localises to the cell inner membrane. Functionally, part of the twin-arginine translocation (Tat) system that transports large folded proteins containing a characteristic twin-arginine motif in their signal peptide across membranes. TatA could form the protein-conducting channel of the Tat system. This chain is Sec-independent protein translocase protein TatA, found in Histophilus somni (strain 129Pt) (Haemophilus somnus).